The chain runs to 301 residues: 33 kDa chaperonin (301 aa).

2 disulfide bridges follow: cysteine 244–cysteine 246 and cysteine 277–cysteine 280.

Belongs to the HSP33 family. Under oxidizing conditions two disulfide bonds are formed involving the reactive cysteines. Under reducing conditions zinc is bound to the reactive cysteines and the protein is inactive.

It is found in the cytoplasm. Redox regulated molecular chaperone. Protects both thermally unfolding and oxidatively damaged proteins from irreversible aggregation. Plays an important role in the bacterial defense system toward oxidative stress. In Geobacter sulfurreducens (strain ATCC 51573 / DSM 12127 / PCA), this protein is 33 kDa chaperonin.